The sequence spans 75 residues: M-myrmeciitoxin-Mp2a (75 aa).

The first 26 residues, 1 to 26 (MKLSCLLLTLAIIFVLTIVHAPNVEA), serve as a signal peptide directing secretion. The propeptide occupies 27–48 (KALADPESDAVGFADAVGEADP). Leucine 74 bears the Leucine amide mark.

It belongs to the formicidae venom precursor-01 superfamily. Ant pilosulin family. Heterodimer with M-MIITX-Mp2b (pilosin-3b) (AC P0C023); disulfide-linked. Only heterodimers (and not monomers) have been identified in the venom. Expressed by the venom gland.

Its subcellular location is the secreted. Heterodimer protein that may serve both defensive (pain-inducing) and predatory (insecticidal) roles. Has membrane-disrupting activity and shows induction of non-specific calcium influx into cells,. Shows broad-spectrum activity against a diverse range of bacteria, and cell lines, as well as hemolytic activity (EC(50)=2.18 uM). In vivo, shows moderate insecticidal activity against D.melanogaster and potent anthelmintic activity against the veterinary nematode H.contortus. In addition, intraplantar injection into mice induces nocifensive behavior and mechanical allodynia. The polypeptide is M-myrmeciitoxin-Mp2a (Myrmecia pilosula (Jack jumper ant)).